A 168-amino-acid polypeptide reads, in one-letter code: uncharacterized protein (168 aa).

The next 4 membrane-spanning stretches (helical) occupy residues 1 to 21 (MFWL…AVAR), 41 to 61 (PYII…VLLM), 68 to 88 (WWLG…WALC), and 123 to 143 (VILE…MCLF).

It is found in the cell membrane. This is an uncharacterized protein from Bacillus subtilis (strain 168).